We begin with the raw amino-acid sequence, 430 residues long: GTPase Obg (430 aa).

Residues 1-158 enclose the Obg domain; the sequence is MFVDQVKISL…LDVSLELKLL (158 aa). The disordered stretch occupies residues 118–145; it reads KGGRGGRGNSRFATPRNPAPDFSEKGEP. Residues 159–329 enclose the OBG-type G domain; it reads ADVGLVGFPS…LLYAIADKLE (171 aa). GTP-binding positions include 165–172, 190–194, 212–215, 282–285, and 310–312; these read GFPSVGKS, FTTIK, DLPG, NKMD, and STI. Positions 172 and 192 each coordinate Mg(2+). The 79-residue stretch at 352-430 folds into the OCT domain; the sequence is KHTPSQDKFT…ILGGEFEFVE (79 aa).

Belongs to the TRAFAC class OBG-HflX-like GTPase superfamily. OBG GTPase family. Monomer. The cofactor is Mg(2+).

It is found in the cytoplasm. Functionally, an essential GTPase which binds GTP, GDP and possibly (p)ppGpp with moderate affinity, with high nucleotide exchange rates and a fairly low GTP hydrolysis rate. Plays a role in control of the cell cycle, stress response, ribosome biogenesis and in those bacteria that undergo differentiation, in morphogenesis control. The sequence is that of GTPase Obg from Staphylococcus aureus (strain MRSA252).